Reading from the N-terminus, the 646-residue chain is Serine/threonine-protein kinase max-2 (646 aa).

The disordered stretch occupies residues 19–40 (FSPSDKDKDRDDEMKPSSSAMD). Residues 22–33 (SDKDKDRDDEMK) show a composition bias toward basic and acidic residues. The CRIB domain maps to 41-54 (ISQPYNTVHRVHVG). The tract at residues 136–345 (LQCSNGSATS…PPPPEEPPVR (210 aa)) is disordered. Composition is skewed to low complexity over residues 142 to 157 (SATSPSTSVSASSSSA) and 167 to 180 (LSTASSTDTSLSLS). Over residues 196–205 (SAPQLKTFTG) the composition is skewed to polar residues. Over residues 214 to 223 (SPFPPQPPVL) the composition is skewed to pro residues. Over residues 229–245 (TASAVATTTTNPTTSNG) the composition is skewed to low complexity. Residues 246–262 (APPPVPGSKGPPVPPKP) show a composition bias toward pro residues. Low complexity-rich tracts occupy residues 273-307 (SSGCSSPQQYSSARSVGNSLSNGSVVSTTSSDGDV) and 323-334 (KNGNTTTNKTTV). A Protein kinase domain is found at 376-627 (YEMKKQIGVG…TTELLAHPFL (252 aa)). ATP is bound by residues 382–390 (IGVGASGTV) and lysine 405. The Proton acceptor role is filled by aspartate 496.

Belongs to the protein kinase superfamily. STE Ser/Thr protein kinase family. STE20 subfamily. In terms of assembly, interacts with mlk-1; the interaction is independent of max-2 and mlk-1 kinase activities. Interacts with mig-2 (GTP-bound form). It depends on Mg(2+) as a cofactor.

The protein localises to the perikaryon. It localises to the cell projection. Its subcellular location is the dendrite. The protein resides in the cytoplasm. The enzyme catalyses L-seryl-[protein] + ATP = O-phospho-L-seryl-[protein] + ADP + H(+). It carries out the reaction L-threonyl-[protein] + ATP = O-phospho-L-threonyl-[protein] + ADP + H(+). Functionally, serine/threonine-protein kinase, which phosphorylates mlk-1. Involved in the stress response to heavy metals by activating the mlk-1/mek-1/kgb-1 pathway. In ventral cord commissural motoneurons, required for dorsal axon guidance downstream of unc-6/netrin repulsion receptor unc-5 and probably of Rho GTPases ced-10 and mig-2. Plays a redundant role with mig-10 in orientating axonal growth of HSN neurons. Plays a redundant role with pak-1 in P neuroblast migration and in distal tip cell (DTC)-mediated guidance of gonad elongation probably downstream of Rho GTPases. In association with pak-2, plays a role in embryogenesis. In association with pak-1, may be involved in spermatogenesis. This Caenorhabditis elegans protein is Serine/threonine-protein kinase max-2.